Consider the following 468-residue polypeptide: Glutamate--tRNA ligase (468 aa).

5-7 (RIA) is a binding site for L-glutamate. A 'HIGH' region motif is present at residues 8–18 (PSPTGDPHVGT). Residue H15 participates in ATP binding. L-glutamate contacts are provided by residues E41, 187-191 (YHLAN), and R205. ATP contacts are provided by residues E208, L236, 243 to 247 (KISKR), and K246. A 'KMSKS' region motif is present at residues 243 to 247 (KISKR). The tract at residues 432 to 447 (QPLRAALTGSLETPGL) is interaction with tRNA.

It belongs to the class-I aminoacyl-tRNA synthetase family. Glutamate--tRNA ligase type 1 subfamily. Monomer.

It is found in the cytoplasm. It carries out the reaction tRNA(Glu) + L-glutamate + ATP = L-glutamyl-tRNA(Glu) + AMP + diphosphate. In the absence of bound tRNA, ATP is bound in a non-productive mode, and the enzyme cannot activate amino acids. Its function is as follows. Catalyzes the attachment of glutamate to tRNA(Glu) in a two-step reaction: glutamate is first activated by ATP to form Glu-AMP and then transferred to the acceptor end of tRNA(Glu). The chain is Glutamate--tRNA ligase from Thermus thermophilus (strain ATCC 27634 / DSM 579 / HB8).